The following is a 311-amino-acid chain: Olfactory receptor 5L1 (311 aa).

The Extracellular segment spans residues 1–25 (MGKENCTTVAEFILLGLSDVPELRV). Residue N5 is glycosylated (N-linked (GlcNAc...) asparagine). A helical membrane pass occupies residues 26–46 (CLFLLFLLIYGVTLLANLGMI). The Cytoplasmic portion of the chain corresponds to 47-54 (ALIQVSSR). The chain crosses the membrane as a helical span at residues 55–75 (LHTPMYFFLSHLSSVDFCYSS). Topologically, residues 76 to 99 (IIVPKMLANIFNKDKAISFLGCMV) are extracellular. Residues C97 and C189 are joined by a disulfide bond. A helical transmembrane segment spans residues 100-120 (QFYLFCTCVVTEVFLLAVMAY). Topologically, residues 121 to 139 (DRFVAICNPLLYTVTMSWK) are cytoplasmic. The chain crosses the membrane as a helical span at residues 140 to 160 (VRVELASCCYFCGTVCSLIHL). Residues 161-196 (CLALRIPFYRSNVINHFFCDLPPVLSLACSDITVNE) are Extracellular-facing. N195 is a glycosylation site (N-linked (GlcNAc...) asparagine). The helical transmembrane segment at 197–217 (TLLFLVATLNESVTIMIILTS) threads the bilayer. At 218–237 (YLLILTTILKMGSAEGRHKA) the chain is on the cytoplasmic side. The helical transmembrane segment at 238-258 (FSTCASHLTAITVFHGTVLSI) threads the bilayer. Residues 259–271 (YCRPSSGNSGDAD) lie on the Extracellular side of the membrane. Residues 272–292 (KVATVFYTVVIPMLNSVIYSL) traverse the membrane as a helical segment. Over 293-311 (RNKDVKEALRKVMGSKIHS) the chain is Cytoplasmic.

It belongs to the G-protein coupled receptor 1 family.

Its subcellular location is the cell membrane. Functionally, odorant receptor. The chain is Olfactory receptor 5L1 (OR5L1) from Homo sapiens (Human).